The following is a 118-amino-acid chain: Endoribonuclease MazF9 (118 aa).

Belongs to the PemK/MazF family. Forms a complex with cognate antitoxin MazE9.

Functionally, toxic component of a type II toxin-antitoxin (TA) system. Upon expression in E.coli and M.smegmatis inhibits cell growth and colony formation. Its toxic effect is neutralized by coexpression with cognate antitoxin MazE9. Acts as an mRNA interferase, specifically cleaving between U and C in UAC sequences. May cleave its cognate antitoxin's gene. In E.coli expression with non-cognate antitoxins VapB27 and VapB40 partially neutralizes the toxin. The polypeptide is Endoribonuclease MazF9 (mazF9) (Mycobacterium tuberculosis (strain ATCC 25618 / H37Rv)).